Consider the following 85-residue polypeptide: Putative membrane protein insertion efficiency factor (85 aa).

The protein belongs to the UPF0161 family.

It localises to the cell inner membrane. Could be involved in insertion of integral membrane proteins into the membrane. This Escherichia coli O157:H7 protein is Putative membrane protein insertion efficiency factor.